The sequence spans 252 residues: NLP effector protein Pc118356 (252 aa).

Positions 1–17 (MALTVLAATALTALIMG) are cleaved as a signal peptide. N-linked (GlcNAc...) asparagine glycans are attached at residues Asn20 and Asn67. Positions 121–127 (QDRHFWE) match the Hepta-peptide GHRHDWE motif motif. The N-linked (GlcNAc...) asparagine glycan is linked to Asn166.

Belongs to the Necrosis inducing protein (NPP1) family.

The protein localises to the secreted. In terms of biological role, secreted effector that contributes strongly to virulence during infection by P.capsici. This Phytophthora capsici protein is NLP effector protein Pc118356.